A 153-amino-acid chain; its full sequence is MDYNVQHVDKRHAAGFHLVGPWEQTVPQGFEQLMKWVDEHAVQPLEWVAVYYGNPQETPPEKLEADTVVSVSADFHLPADGEGAITTEIAAGQYAIARVRVSNDDFGMSWQAFFAALLGDGKTIDPARACFEVYLNDGYSDGFWDIDMHIPVQ.

The protein belongs to the DNA gyrase inhibitor family. As to quaternary structure, interacts with DNA gyrase.

Its subcellular location is the cytoplasm. In terms of biological role, inhibits the supercoiling activity of DNA gyrase. Acts by inhibiting DNA gyrase at an early step, prior to (or at the step of) binding of DNA by the gyrase. It protects cells against toxins that target DNA gyrase, by inhibiting activity of these toxins and reducing the formation of lethal double-strand breaks in the cell. This chain is DNA gyrase inhibitor 1, found in Dickeya dadantii (strain 3937) (Erwinia chrysanthemi (strain 3937)).